We begin with the raw amino-acid sequence, 442 residues long: Glutamyl-tRNA(Gln) amidotransferase subunit D (442 aa).

The tract at residues 63-84 (TQTDIGSSAGAGADTEADKTES) is disordered. An Asparaginase/glutaminase domain is found at 102 to 429 (PTVSLISTGG…PDPTNAMRKS (328 aa)). Catalysis depends on residues Thr112, Thr188, Asp189, and Lys265.

This sequence belongs to the asparaginase 1 family. GatD subfamily. In terms of assembly, heterodimer of GatD and GatE.

The catalysed reaction is L-glutamyl-tRNA(Gln) + L-glutamine + ATP + H2O = L-glutaminyl-tRNA(Gln) + L-glutamate + ADP + phosphate + H(+). Allows the formation of correctly charged Gln-tRNA(Gln) through the transamidation of misacylated Glu-tRNA(Gln) in organisms which lack glutaminyl-tRNA synthetase. The reaction takes place in the presence of glutamine and ATP through an activated gamma-phospho-Glu-tRNA(Gln). The GatDE system is specific for glutamate and does not act on aspartate. This chain is Glutamyl-tRNA(Gln) amidotransferase subunit D, found in Haloquadratum walsbyi (strain DSM 16790 / HBSQ001).